The primary structure comprises 205 residues: Small ribosomal subunit protein uS4 (205 aa).

Residues 18–46 (NIWGRPKSPVNRREYGPGQHGQRRKGKLS) are disordered. Residues 94–157 (RRLDTVVFRA…KQLAIVLEAT (64 aa)) form the S4 RNA-binding domain.

The protein belongs to the universal ribosomal protein uS4 family. In terms of assembly, part of the 30S ribosomal subunit. Contacts protein S5. The interaction surface between S4 and S5 is involved in control of translational fidelity.

Functionally, one of the primary rRNA binding proteins, it binds directly to 16S rRNA where it nucleates assembly of the body of the 30S subunit. Its function is as follows. With S5 and S12 plays an important role in translational accuracy. The chain is Small ribosomal subunit protein uS4 from Bradyrhizobium sp. (strain BTAi1 / ATCC BAA-1182).